A 747-amino-acid polypeptide reads, in one-letter code: Meprin A subunit alpha (747 aa).

The first 20 residues, 1-20, serve as a signal peptide directing secretion; it reads MLWIQPACLLSLIFSAHIAA. Residues 21 to 64 constitute a propeptide that is removed on maturation; that stretch reads VSIKHLLNGSDHDTDVGEQKDIFEINLAAGLNLFQGDILLPRTR. N-linked (GlcNAc...) asparagine glycosylation is found at asparagine 28 and asparagine 139. Residues 65-259 form the Peptidase M12A domain; that stretch reads NAMRDPSSRW…IRLNRMYNCT (195 aa). The Extracellular segment spans residues 65–713; it reads NAMRDPSSRW…FYAGERCQAM (649 aa). Disulfide bonds link cysteine 106-cysteine 258, cysteine 127-cysteine 146, and cysteine 268-cysteine 430. Histidine 154 contributes to the Zn(2+) binding site. The active site involves glutamate 155. Residues histidine 158 and histidine 164 each contribute to the Zn(2+) site. Asparagine 221, asparagine 257, asparagine 317, asparagine 413, asparagine 439, asparagine 533, and asparagine 540 each carry an N-linked (GlcNAc...) asparagine glycan. Positions 263–432 constitute an MAM domain; the sequence is TLLDHCDFEK…ITLTETPCPA (170 aa). The region spanning 433-594 is the MATH domain; sequence GVWTIRNISQ…GDSLIIFVDF (162 aa). Positions 638 to 663 are disordered; that stretch reads ESLPSSLGQRHPSRQKRSVENTGPME. The EGF-like domain occupies 671-711; that stretch reads FRDPCDPNPCQNEGTCVNVKGMASCRCVSGHAFFYAGERCQ. 3 disulfide bridges follow: cysteine 675–cysteine 686, cysteine 680–cysteine 695, and cysteine 697–cysteine 710. A helical membrane pass occupies residues 714–741; it reads HVHGSLLGLLIGCIAGLIFLTFVTFSTT. The Cytoplasmic portion of the chain corresponds to 742-747; it reads NGKLRQ.

As to quaternary structure, homotetramer consisting of disulfide-linked alpha subunits, homooligomer consisting of disulfide-linked alpha subunit homodimers, or heterotetramer of two alpha and two beta subunits formed by non-covalent association of two disulfide-linked heterodimers. Genetic factors determine which oligomer(s) will be formed (strain-specific). Interacts with MBL2 through its carbohydrate moiety. This interaction may inhibit its catalytic activity. It depends on Zn(2+) as a cofactor. N-glycosylated; contains GlcNAc, galactose, mannose and a small amount of fucose. Kidney, intestinal brush borders and salivary ducts.

The protein resides in the membrane. It carries out the reaction Hydrolysis of protein and peptide substrates preferentially on carboxyl side of hydrophobic residues.. With respect to regulation, inhibited by metal ion chelators EDTA and 1,10-phenanthroline, bradykinin analogs, cysteine, CONA65, and several hydroxamate compounds, particularly tyrosine hydroxamate. Not inhibited by 3,4-dichloroisocourmarin, soybean trypsin inhibitor, or the cysteine proteinase inhibitors iodoacetic acid and E-64. In Mus musculus (Mouse), this protein is Meprin A subunit alpha (Mep1a).